Here is an 880-residue protein sequence, read N- to C-terminus: Alanine--tRNA ligase (880 aa).

This sequence belongs to the class-II aminoacyl-tRNA synthetase family.

It is found in the cytoplasm. It carries out the reaction tRNA(Ala) + L-alanine + ATP = L-alanyl-tRNA(Ala) + AMP + diphosphate. Its function is as follows. Catalyzes the attachment of alanine to tRNA(Ala) in a two-step reaction: alanine is first activated by ATP to form Ala-AMP and then transferred to the acceptor end of tRNA(Ala). Also edits incorrectly charged Ser-tRNA(Ala) and Gly-tRNA(Ala) via its editing domain. This Lactiplantibacillus plantarum (strain ATCC BAA-793 / NCIMB 8826 / WCFS1) (Lactobacillus plantarum) protein is Alanine--tRNA ligase (alaS).